The primary structure comprises 151 residues: Large ribosomal subunit protein eL19 (151 aa).

Residues 57–81 (KKGISSARVKKLKEQRKKGRRRGPG) are compositionally biased toward basic residues. Residues 57–95 (KKGISSARVKKLKEQRKKGRRRGPGSRRGAAGARTPPKE) are disordered.

It belongs to the eukaryotic ribosomal protein eL19 family. Part of the 50S ribosomal subunit.

Binds to the 23S rRNA. The protein is Large ribosomal subunit protein eL19 of Methanocaldococcus jannaschii (strain ATCC 43067 / DSM 2661 / JAL-1 / JCM 10045 / NBRC 100440) (Methanococcus jannaschii).